We begin with the raw amino-acid sequence, 783 residues long: MNPGIEKYEIRFDFDLKDFTYTSHERIHLAGDWKDIKLDAVRLSVDKVTCNGQPMRFETGQDTVTVKGSFHDKDVIDIDFHAKVSDTLMGLYLSRTKEGTMITTQFESNGARMAFPCVDHPAYKAVFAITVVIDKDYDAISNMPPKRIEVSERKIVEFQDTPKMSTYLLYIGVGKFKYATDKYRDIDLILVSLKDIKSKYPLEIARKSIEFYESYFGIPYALPKMHLISVPEFGAGAMENWGAITFREVALMATENSGSIMKQNAAITIAHEIAHQWFGDLVTMKWWNDLWLNESFATFMSYKTVDSFSKQWDVFADFIRSETGGALRSDSLKNTHPIEVDVKDPDEISQIFDEISYGKGASILRMIEDYAGYEEFRKGISKYLNDHRYGNAEGSDLWTAIEDVSGKPVKRVMEYWIKNPGYPVVSVVKSGNKFRLTQEQFFLDGTRGQGKWPIPLTVMTKSGKKAMLMEESAEIEDMVKVNVNSSGFYRVSYDGESFETVMKNYSKLSNLDRWGLISDLYAFLISGRVSVDDYLARIKGFFEDSDHLIVEEIASQLTGLYLLKPDSNRIRETAASYLSRQVVALGDKQKGEDDKISKIRGIVTQDLAMVDDHFASDLARKFSTLAEDPDLALAKSIAAAKAYGISELASAADKYTDDEIRVRIIAAMGWCSPSDLKSVFELIDKGTIRKQDMLYVFSNMPANPKGRDFFFSNIDRIVALMEHAFEGTGYTSRILETAIPYLGLARYEDVKKKAEQIRKPSYNVGINKGLETLEIVRKLYNKL.

Substrate is bound by residues glutamate 107 and 236–240 (GAMEN). Position 271 (histidine 271) interacts with Zn(2+). Residue glutamate 272 is the Proton acceptor of the active site. Residues histidine 275 and glutamate 294 each coordinate Zn(2+).

This sequence belongs to the peptidase M1 family. In terms of assembly, monomer. Part of the Tricorn proteolytic complex. It depends on Zn(2+) as a cofactor.

It is found in the cytoplasm. Functionally, proteases F1, F2 and F3 degrade oligopeptides produced by Tricorn (themselves probably produced by the proteasome), yielding free amino acids. This is Tricorn protease-interacting factor F2 (trf2) from Thermoplasma acidophilum (strain ATCC 25905 / DSM 1728 / JCM 9062 / NBRC 15155 / AMRC-C165).